Consider the following 360-residue polypeptide: uncharacterized protein (360 aa).

One can recognise an ABC transporter domain in the interval Leu-4–Ile-235. Gly-37–Ser-44 is an ATP binding site.

It belongs to the ABC transporter superfamily.

This is an uncharacterized protein from Escherichia coli O157:H7.